The sequence spans 154 residues: Deoxyuridine 5'-triphosphate nucleotidohydrolase (154 aa).

Residues 64 to 66 (RSG), Asn77, 81 to 83 (TID), and Lys91 each bind substrate.

The protein belongs to the dUTPase family. As to quaternary structure, homotrimer. Mg(2+) serves as cofactor.

It catalyses the reaction dUTP + H2O = dUMP + diphosphate + H(+). The protein operates within pyrimidine metabolism; dUMP biosynthesis; dUMP from dCTP (dUTP route): step 2/2. Its function is as follows. This enzyme is involved in nucleotide metabolism: it produces dUMP, the immediate precursor of thymidine nucleotides and it decreases the intracellular concentration of dUTP so that uracil cannot be incorporated into DNA. The polypeptide is Deoxyuridine 5'-triphosphate nucleotidohydrolase (Mycobacterium bovis (strain BCG / Pasteur 1173P2)).